Here is a 122-residue protein sequence, read N- to C-terminus: Acidic phospholipase A2 CbIalpha (122 aa).

Cystine bridges form between Cys26–Cys115, Cys28–Cys44, Cys43–Cys95, Cys49–Cys122, Cys50–Cys88, Cys57–Cys81, and Cys75–Cys86. Ca(2+) is bound by residues Tyr27, Gly29, and Gly31. Residue His47 is part of the active site. Asp48 is a Ca(2+) binding site. Asp89 is an active-site residue.

This sequence belongs to the phospholipase A2 family. Group II subfamily. D49 sub-subfamily. In terms of assembly, heterodimer of an acidic subunit (CbIalpha or CbIbeta) and a basic subunit (CbII). The acidic subunit is non-toxic, and increases the toxicity of the basic subunit. Ca(2+) is required as a cofactor. In terms of tissue distribution, expressed by the venom gland.

It localises to the secreted. The enzyme catalyses a 1,2-diacyl-sn-glycero-3-phosphocholine + H2O = a 1-acyl-sn-glycero-3-phosphocholine + a fatty acid + H(+). Functionally, heterodimer: presynaptic neurotoxin. Monomer: Snake venom phospholipase A2 (PLA2) is inactive towards micellar phosphatidylcholine but is weakly active towards non-micellar dithiolecithin. PLA2 catalyzes the calcium-dependent hydrolysis of the 2-acyl groups in 3-sn-phosphoglycerides. This is Acidic phospholipase A2 CbIalpha from Pseudocerastes fieldi (Field's horned viper).